Consider the following 499-residue polypeptide: Lysine--tRNA ligase (499 aa).

The Mg(2+) site is built by glutamate 408 and glutamate 415.

It belongs to the class-II aminoacyl-tRNA synthetase family. Homodimer. Requires Mg(2+) as cofactor.

The protein resides in the cytoplasm. The catalysed reaction is tRNA(Lys) + L-lysine + ATP = L-lysyl-tRNA(Lys) + AMP + diphosphate. The chain is Lysine--tRNA ligase from Bacillus mycoides (strain KBAB4) (Bacillus weihenstephanensis).